The sequence spans 355 residues: GPN-loop GTPase 1 (355 aa).

The segment at 1–30 (MAEKAENLPSSSAEASEEPSPQTGPNVNQK) is disordered. Residues 9 to 21 (PSSSAEASEEPSP) are compositionally biased toward low complexity. Residue 40-45 (GSGKTT) coordinates GTP. Residues 97-99 (GPN) carry the Gly-Pro-Asn (GPN)-loop; involved in dimer interface motif. Residue 200–203 (NKAD) participates in GTP binding. Positions 286–311 (EKVLAEKKLLDEEERKKRDEETLKGK) form a coiled coil.

Belongs to the GPN-loop GTPase family. As to quaternary structure, heterodimer with GPN3. Binds to RNA polymerase II (RNAPII).

It is found in the cytoplasm. The protein localises to the nucleus. Functionally, small GTPase required for proper nuclear import of RNA polymerase II (RNAPII). May act at an RNAP assembly step prior to nuclear import. This Caenorhabditis elegans protein is GPN-loop GTPase 1.